Here is a 683-residue protein sequence, read N- to C-terminus: UvrABC system protein B (683 aa).

The interval 1–29 (MTDTGPLQPDRPDLDRPLSVDAPFEPAGD) is disordered. Positions 39–417 (AGFESGAEKQ…PGDYERDHSE (379 aa)) constitute a Helicase ATP-binding domain. 52–59 (GVTGSGKT) contacts ATP. A Beta-hairpin motif is present at residues 105–128 (YYDYYQPEAYVEQTDTYIDKDMSI). The 163-residue stretch at 442–604 (QVEDLIERIQ…EPRTIEKPVS (163 aa)) folds into the Helicase C-terminal domain. Over residues 587–603 (EFNAEHGHEPRTIEKPV) the composition is skewed to basic and acidic residues. The disordered stretch occupies residues 587–620 (EFNAEHGHEPRTIEKPVSETNLPGSSTDTDGVAD). Residues 604–615 (SETNLPGSSTDT) show a composition bias toward polar residues. The region spanning 630–665 (EQLIERLETRMQEAADNLEFELAADIRDRIRELRET) is the UVR domain.

Belongs to the UvrB family. As to quaternary structure, forms a heterotetramer with UvrA during the search for lesions. Interacts with UvrC in an incision complex.

It is found in the cytoplasm. In terms of biological role, the UvrABC repair system catalyzes the recognition and processing of DNA lesions. A damage recognition complex composed of 2 UvrA and 2 UvrB subunits scans DNA for abnormalities. Upon binding of the UvrA(2)B(2) complex to a putative damaged site, the DNA wraps around one UvrB monomer. DNA wrap is dependent on ATP binding by UvrB and probably causes local melting of the DNA helix, facilitating insertion of UvrB beta-hairpin between the DNA strands. Then UvrB probes one DNA strand for the presence of a lesion. If a lesion is found the UvrA subunits dissociate and the UvrB-DNA preincision complex is formed. This complex is subsequently bound by UvrC and the second UvrB is released. If no lesion is found, the DNA wraps around the other UvrB subunit that will check the other stand for damage. The polypeptide is UvrABC system protein B (Natronomonas pharaonis (strain ATCC 35678 / DSM 2160 / CIP 103997 / JCM 8858 / NBRC 14720 / NCIMB 2260 / Gabara) (Halobacterium pharaonis)).